A 455-amino-acid chain; its full sequence is MLTDIVILAAGQGTRMHSALPKVLQPLGGKPMLAHVLATATDLAVRRIHIVVGFGGDAVQAAFPDTQASWWIQAQQLGTGDALKSALPGLTGADRVLVLYGDVPLLTAATLREFLQQTPVTALGLTTASVSEPHGYGRILRDADGQVQGIREHKDCQTDEQAICEINLGMMVLPVQPLAGWLQGLSARNAQGEIYLTDVVAAARADGYVVWPFTLADATEALGVNDPVQLAILERVFQRQQLRALQMQGLRVADPARVDIRGELTCGQDCWVDPNVLFVGEVHLGHRVRVGAGAVLQDARIGDDVEILPYSHIEGAQIGAGARIGPFARIRPGTEIGEAAHIGNYVEVKAAKIGAGSKANHLSYLGDAEIGTGVNVGAGTITCNYDGANKHRTIIGNDVFIGSDSQLVAPVNIGDGATIGAGSTITKEVPPGGLTLSRSPQRTIPHWQRPRRDKK.

The segment at 1-227 is pyrophosphorylase; the sequence is MLTDIVILAA…ATEALGVNDP (227 aa). UDP-N-acetyl-alpha-D-glucosamine contacts are provided by residues 8–11, Lys22, Gln73, 78–79, 100–102, Gly137, Glu152, Asn167, and Asn225; these read LAAG, GT, and YGD. Residue Asp102 participates in Mg(2+) binding. Asn225 contacts Mg(2+). The linker stretch occupies residues 228–248; the sequence is VQLAILERVFQRQQLRALQMQ. The interval 249–455 is N-acetyltransferase; the sequence is GLRVADPARV…HWQRPRRDKK (207 aa). Positions 331 and 349 each coordinate UDP-N-acetyl-alpha-D-glucosamine. The Proton acceptor role is filled by His361. UDP-N-acetyl-alpha-D-glucosamine-binding residues include Tyr364 and Asn375. Acetyl-CoA-binding positions include Ala378, 384–385, Ser403, Ala421, and Arg438; that span reads NY. A disordered region spans residues 420-455; it reads GAGSTITKEVPPGGLTLSRSPQRTIPHWQRPRRDKK.

In the N-terminal section; belongs to the N-acetylglucosamine-1-phosphate uridyltransferase family. It in the C-terminal section; belongs to the transferase hexapeptide repeat family. As to quaternary structure, homotrimer. Mg(2+) serves as cofactor.

Its subcellular location is the cytoplasm. The enzyme catalyses alpha-D-glucosamine 1-phosphate + acetyl-CoA = N-acetyl-alpha-D-glucosamine 1-phosphate + CoA + H(+). The catalysed reaction is N-acetyl-alpha-D-glucosamine 1-phosphate + UTP + H(+) = UDP-N-acetyl-alpha-D-glucosamine + diphosphate. It functions in the pathway nucleotide-sugar biosynthesis; UDP-N-acetyl-alpha-D-glucosamine biosynthesis; N-acetyl-alpha-D-glucosamine 1-phosphate from alpha-D-glucosamine 6-phosphate (route II): step 2/2. It participates in nucleotide-sugar biosynthesis; UDP-N-acetyl-alpha-D-glucosamine biosynthesis; UDP-N-acetyl-alpha-D-glucosamine from N-acetyl-alpha-D-glucosamine 1-phosphate: step 1/1. Its pathway is bacterial outer membrane biogenesis; LPS lipid A biosynthesis. Its function is as follows. Catalyzes the last two sequential reactions in the de novo biosynthetic pathway for UDP-N-acetylglucosamine (UDP-GlcNAc). The C-terminal domain catalyzes the transfer of acetyl group from acetyl coenzyme A to glucosamine-1-phosphate (GlcN-1-P) to produce N-acetylglucosamine-1-phosphate (GlcNAc-1-P), which is converted into UDP-GlcNAc by the transfer of uridine 5-monophosphate (from uridine 5-triphosphate), a reaction catalyzed by the N-terminal domain. The sequence is that of Bifunctional protein GlmU from Acidithiobacillus ferrooxidans (strain ATCC 23270 / DSM 14882 / CIP 104768 / NCIMB 8455) (Ferrobacillus ferrooxidans (strain ATCC 23270)).